The chain runs to 640 residues: Biosynthetic arginine decarboxylase (640 aa).

Position 105 is an N6-(pyridoxal phosphate)lysine (Lys-105). 290–300 (FDVGGGLAVDY) serves as a coordination point for substrate.

The protein belongs to the Orn/Lys/Arg decarboxylase class-II family. SpeA subfamily. The cofactor is Mg(2+). It depends on pyridoxal 5'-phosphate as a cofactor.

It carries out the reaction L-arginine + H(+) = agmatine + CO2. Its function is as follows. Catalyzes the biosynthesis of agmatine from arginine. In Vibrio cholerae serotype O1 (strain ATCC 39315 / El Tor Inaba N16961), this protein is Biosynthetic arginine decarboxylase.